The sequence spans 223 residues: MIF4G domain-containing protein A (223 aa).

An MIF4G domain is found at 7–206 (QEDYKMQAFD…LEMIEYRAAG (200 aa)).

Belongs to the MIF4GD family. As to quaternary structure, interacts with eif4g1, eif4g2 and slbp; probably tethered by SLBP to the 3'-end of mRNAs ending with the histone stem-loop, it also interacts with eif4g1 which is bound to their 5'-end.

The protein localises to the cytoplasm. It is found in the nucleus. Functionally, functions in replication-dependent translation of histone mRNAs which differ from other eukaryotic mRNAs in that they do not end with a poly-A tail but a stem-loop. May participate in circularizing those mRNAs specifically enhancing their translation. The sequence is that of MIF4G domain-containing protein A (mif4gd-a) from Xenopus laevis (African clawed frog).